A 291-amino-acid chain; its full sequence is Kidney mitochondrial carrier protein 1 (291 aa).

Ser2 bears the N-acetylserine mark. 3 Solcar repeats span residues 7–96, 104–189, and 198–289; these read KPFV…LKRL, ETLP…TKKH, and DTVY…LKKL. The next 6 helical transmembrane spans lie at 9–26, 71–89, 105–124, 164–183, 204–224, and 264–283; these read FVYG…TFPI, GIAP…KIGT, TLPI…STIA, GVSL…LPVY, FLSS…VDVV, and GFWP…FVTY.

This sequence belongs to the mitochondrial carrier (TC 2.A.29) family. As to quaternary structure, interacts with VDAC1.

It localises to the mitochondrion inner membrane. It catalyses the reaction sulfite(in) + sulfate(out) = sulfite(out) + sulfate(in). It carries out the reaction thiosulfate(in) + sulfate(out) = thiosulfate(out) + sulfate(in). The catalysed reaction is sulfate(out) + phosphate(in) = sulfate(in) + phosphate(out). The enzyme catalyses oxalate(in) + sulfate(out) = oxalate(out) + sulfate(in). It catalyses the reaction malonate(in) + sulfate(out) = malonate(out) + sulfate(in). It carries out the reaction maleate(in) + sulfate(out) = maleate(out) + sulfate(in). The catalysed reaction is (S)-malate(in) + sulfate(out) = (S)-malate(out) + sulfate(in). The enzyme catalyses (3S)-citramalate(in) + sulfate(out) = (3S)-citramalate(out) + sulfate(in). It catalyses the reaction (3R)-citramalate(in) + sulfate(out) = (3R)-citramalate(out) + sulfate(in). It carries out the reaction sulfate(out) + succinate(in) = sulfate(in) + succinate(out). The catalysed reaction is (S,S)-tartrate(in) + sulfate(out) = (S,S)-tartrate(out) + sulfate(in). The enzyme catalyses (2R,3R)-tartrate(in) + sulfate(out) = (2R,3R)-tartrate(out) + sulfate(in). It catalyses the reaction D-aspartate(in) + sulfate(out) = D-aspartate(out) + sulfate(in). It carries out the reaction L-aspartate(in) + sulfate(out) = L-aspartate(out) + sulfate(in). The catalysed reaction is sulfate(in) = sulfate(out). The enzyme catalyses phosphate(in) = phosphate(out). It catalyses the reaction (S)-malate(out) = (S)-malate(in). Its activity is regulated as follows. Increased activity at pH 6.0. sulfate/sulfate exchange activity is inhibited strongly by pyridoxal 5'-phosphate, bathophenanthroline and the organic mercurials mersalyl, p-chloromercuribenzoate and HgCl2. Antiporter that transports inorganic anions (sulfate, sulfite, thiosulfate and phosphate) and, to a lesser extent, a variety of dicarboxylates (e.g. malonate, malate and citramalate) and, even more so, aspartate. The sulfate/sulfate exchange is much higher than the phosphate/phosphate and malate/malate exchanges. The transport affinities is higher for sulfate and thiosulfate than for any other substrate. May catalyze the export of sulfite and thiosulfate (the hydrogen sulfide degradation products) from the mitochondria, thereby modulating the level of the hydrogen sulfide. Also may mediate a very low unidirectional transport of sulfate, phosphate and (S)-malate. The protein is Kidney mitochondrial carrier protein 1 of Homo sapiens (Human).